The primary structure comprises 120 residues: Putative ferric transport system permease-like protein AfuB (120 aa).

Over 1–38 (MESLPGQIDKSLDEASLSLRAGSLRTITHILLPLLRPA) the chain is Cytoplasmic. Positions 1-102 (MESLPGQIDK…VVMLAIIFIF (102 aa)) constitute an ABC transmembrane type-1 domain. The chain crosses the membrane as a helical span at residues 39–59 (ILSALIYSFVRAITTVSAIVF). Residues 60 to 81 (LVTPDTRVATAYILNRVEDGEY) are Periplasmic-facing. The chain crosses the membrane as a helical span at residues 82–102 (GVAIAYGSILIVVMLAIIFIF). Residues 103-120 (DWLIGESRTSRSKAKNQA) lie on the Cytoplasmic side of the membrane.

It belongs to the binding-protein-dependent transport system permease family. FbpB subfamily.

It is found in the cell inner membrane. Its function is as follows. A severely truncated paralog of the AfuB uptake protein, homologous only to the last 20% of the intact protein in Actinobacillus. This chain is Putative ferric transport system permease-like protein AfuB (afuB), found in Escherichia coli (strain K12).